We begin with the raw amino-acid sequence, 196 residues long: ATP-dependent Clp protease proteolytic subunit (196 aa).

Serine 96 (nucleophile) is an active-site residue. Residue histidine 121 is part of the active site.

Belongs to the peptidase S14 family. In terms of assembly, fourteen ClpP subunits assemble into 2 heptameric rings which stack back to back to give a disk-like structure with a central cavity, resembling the structure of eukaryotic proteasomes.

The protein resides in the cytoplasm. The enzyme catalyses Hydrolysis of proteins to small peptides in the presence of ATP and magnesium. alpha-casein is the usual test substrate. In the absence of ATP, only oligopeptides shorter than five residues are hydrolyzed (such as succinyl-Leu-Tyr-|-NHMec, and Leu-Tyr-Leu-|-Tyr-Trp, in which cleavage of the -Tyr-|-Leu- and -Tyr-|-Trp bonds also occurs).. Cleaves peptides in various proteins in a process that requires ATP hydrolysis. Has a chymotrypsin-like activity. Plays a major role in the degradation of misfolded proteins. The polypeptide is ATP-dependent Clp protease proteolytic subunit (Streptococcus gordonii (strain Challis / ATCC 35105 / BCRC 15272 / CH1 / DL1 / V288)).